The chain runs to 124 residues: Small ribosomal subunit protein uS12 (124 aa).

The segment at 1 to 32 (MPTIQQLVRKGRQAKASKTKTPALKGSPQRRG) is disordered. Over residues 9–18 (RKGRQAKASK) the composition is skewed to basic residues. 3-methylthioaspartic acid is present on aspartate 89.

This sequence belongs to the universal ribosomal protein uS12 family. Part of the 30S ribosomal subunit. Contacts proteins S8 and S17. May interact with IF1 in the 30S initiation complex.

Functionally, with S4 and S5 plays an important role in translational accuracy. In terms of biological role, interacts with and stabilizes bases of the 16S rRNA that are involved in tRNA selection in the A site and with the mRNA backbone. Located at the interface of the 30S and 50S subunits, it traverses the body of the 30S subunit contacting proteins on the other side and probably holding the rRNA structure together. The combined cluster of proteins S8, S12 and S17 appears to hold together the shoulder and platform of the 30S subunit. The chain is Small ribosomal subunit protein uS12 from Acidothermus cellulolyticus (strain ATCC 43068 / DSM 8971 / 11B).